The chain runs to 313 residues: MRTIKVGSRRSKLAMTQTKWVINKLKELNPSYNFEIREIVTKGDRILDVTLSKVGGKGLFVKEIEQALLHQEIDMAVHSMKDMPAVLPEGLVIGCIPKREDPRDALISKGHQKLDGIKEGGIIGTSSLRRSAQILAERPDLTIKWIRGNIDTRLQKLETEDYDAIILAAAGLSRMGWKDDVVSEFLEPDRCLPAVGQGALAIECRESDEELLKLFAQFTDEYTQRTVAAERAFLHAMEGGCQVPIAGYASVNDRDEVELVGLVASPDGKTIYKETAAGHDPEEIGKRCAAMMSEKGAKALIDSVKQELDQDGK.

Cys-241 carries the post-translational modification S-(dipyrrolylmethanemethyl)cysteine.

This sequence belongs to the HMBS family. As to quaternary structure, monomer. Dipyrromethane serves as cofactor.

The catalysed reaction is 4 porphobilinogen + H2O = hydroxymethylbilane + 4 NH4(+). Its pathway is porphyrin-containing compound metabolism; protoporphyrin-IX biosynthesis; coproporphyrinogen-III from 5-aminolevulinate: step 2/4. Its function is as follows. Tetrapolymerization of the monopyrrole PBG into the hydroxymethylbilane pre-uroporphyrinogen in several discrete steps. This Bacillus velezensis (strain DSM 23117 / BGSC 10A6 / LMG 26770 / FZB42) (Bacillus amyloliquefaciens subsp. plantarum) protein is Porphobilinogen deaminase.